Consider the following 510-residue polypeptide: Dentin matrix acidic phosphoprotein 1 (510 aa).

Residues 1 to 16 (MKTTILLMFLWGLSCA) form the signal peptide. The tract at residues 23 to 510 (QNTESKSSEE…QDDNDCQDGY (488 aa)) is disordered. Composition is skewed to acidic residues over residues 61-77 (QANE…EVLG) and 101-119 (NKDD…DDDG). Basic and acidic residues-rich tracts occupy residues 123–180 (PEER…RPEG), 273–288 (RLPE…DSRT), and 299–328 (PDSK…RSPE). Residues 333 to 343 (VQDPSSESSQE) are compositionally biased toward polar residues. An N-linked (GlcNAc...) asparagine glycan is attached at N351. Basic and acidic residues predominate over residues 358–367 (EALHESRGDN). The Cell attachment site motif lies at 364–366 (RGD). N370 carries N-linked (GlcNAc...) asparagine glycosylation. Residues 407–417 (SESHESLRSSE) are compositionally biased toward basic and acidic residues. 2 N-linked (GlcNAc...) asparagine glycosylation sites follow: N427 and N464. Basic and acidic residues predominate over residues 481 to 499 (TEVESRKLTVDAYHNKPIG). A compositionally biased stretch (acidic residues) spans 500–510 (DQDDNDCQDGY).

In terms of assembly, interacts with importin alpha. Post-translationally, phosphorylated in the cytosol and extracellular matrix and unphosphorylated in the nucleus. Phosphorylation is necessary for nucleocytoplasmic transport and may be catalyzed by a nuclear isoform of CK2 and can be augmented by calcium. Phosphorylated (in vitro) by FAM20C in the extracellular medium at sites within the S-x-E/pS motif. In terms of tissue distribution, expressed in fetal brain, bone and tooth particularly in odontoblast, but not in ameloblast. Not expressed in liver and skin.

It is found in the nucleus. Its subcellular location is the cytoplasm. It localises to the secreted. The protein localises to the extracellular space. The protein resides in the extracellular matrix. In terms of biological role, may have a dual function during osteoblast differentiation. In the nucleus of undifferentiated osteoblasts, unphosphorylated form acts as a transcriptional component for activation of osteoblast-specific genes like osteocalcin. During the osteoblast to osteocyte transition phase it is phosphorylated and exported into the extracellular matrix, where it regulates nucleation of hydroxyapatite. This chain is Dentin matrix acidic phosphoprotein 1 (DMP1), found in Bos taurus (Bovine).